Consider the following 352-residue polypeptide: Histidine biosynthesis bifunctional protein HisB (352 aa).

The interval 1 to 163 (MKKILFIDRD…MVASAIINDA (163 aa)) is histidinol-phosphatase. Asp8 (nucleophile) is an active-site residue. Mg(2+) contacts are provided by Asp8 and Asp10. Residue Asp10 is the Proton donor of the active site. Cys91, His93, Cys99, and Cys101 together coordinate Zn(2+). Asp128 lines the Mg(2+) pocket. Positions 164–352 (RKASVQRKTK…NYLPSTKGVL (189 aa)) are imidazoleglycerol-phosphate dehydratase.

The protein in the N-terminal section; belongs to the histidinol-phosphatase family. It in the C-terminal section; belongs to the imidazoleglycerol-phosphate dehydratase family. It depends on Mg(2+) as a cofactor. Zn(2+) serves as cofactor.

Its subcellular location is the cytoplasm. The enzyme catalyses D-erythro-1-(imidazol-4-yl)glycerol 3-phosphate = 3-(imidazol-4-yl)-2-oxopropyl phosphate + H2O. The catalysed reaction is L-histidinol phosphate + H2O = L-histidinol + phosphate. Its pathway is amino-acid biosynthesis; L-histidine biosynthesis; L-histidine from 5-phospho-alpha-D-ribose 1-diphosphate: step 6/9. It participates in amino-acid biosynthesis; L-histidine biosynthesis; L-histidine from 5-phospho-alpha-D-ribose 1-diphosphate: step 8/9. In Legionella pneumophila subsp. pneumophila (strain Philadelphia 1 / ATCC 33152 / DSM 7513), this protein is Histidine biosynthesis bifunctional protein HisB.